We begin with the raw amino-acid sequence, 93 residues long: Alpha-defensin 21 (93 aa).

Residues Met1 to Thr19 form the signal peptide. Residues Asp20 to Leu58 constitute a propeptide that is removed on maturation. A disordered region spans residues Ile22–Ser43. The segment covering Thr25 to Gln40 has biased composition (acidic residues). 3 disulfide bridges follow: Cys64/Cys89, Cys66/Cys81, and Cys71/Cys88.

This sequence belongs to the alpha-defensin family.

It localises to the secreted. May have microbicidal activities. The protein is Alpha-defensin 21 (Defa21) of Mus musculus (Mouse).